We begin with the raw amino-acid sequence, 357 residues long: Mannonate dehydratase (357 aa).

The protein belongs to the mannonate dehydratase family. Fe(2+) is required as a cofactor. Requires Mn(2+) as cofactor.

The enzyme catalyses D-mannonate = 2-dehydro-3-deoxy-D-gluconate + H2O. It functions in the pathway carbohydrate metabolism; pentose and glucuronate interconversion. Its function is as follows. Catalyzes the dehydration of D-mannonate. In Enterococcus faecalis (strain ATCC 700802 / V583), this protein is Mannonate dehydratase.